An 81-amino-acid chain; its full sequence is Trefoil factor 1 (81 aa).

An N-terminal signal peptide occupies residues 1 to 23; it reads MEHRVIYVLVLVCALTLSSLAQG. In terms of domain architecture, P-type spans 26–69; sequence ETCTVAPHHRDNCGSPGITPSQCKDKGCCFDNTVRGVPWCYYPV. Intrachain disulfides connect cysteine 28–cysteine 54, cysteine 38–cysteine 53, and cysteine 48–cysteine 65.

Its subcellular location is the secreted. In terms of biological role, stabilizer of the mucous gel overlying the gastrointestinal mucosa that provides a physical barrier against various noxious agents. The chain is Trefoil factor 1 (TFF1) from Canis lupus familiaris (Dog).